A 306-amino-acid chain; its full sequence is Light-independent protochlorophyllide reductase iron-sulfur ATP-binding protein (306 aa).

Residues 1–31 (MREAAGLEARGLKSPPILKGQDGEGSLQVHQ) are disordered. ATP contacts are provided by residues 50-55 (GIGKST) and lysine 79. Position 54 (serine 54) interacts with Mg(2+). [4Fe-4S] cluster contacts are provided by cysteine 135 and cysteine 169. Position 220–221 (220–221 (NR)) interacts with ATP.

This sequence belongs to the NifH/BchL/ChlL family. Homodimer. Protochlorophyllide reductase is composed of three subunits; BchL, BchN and BchB. Requires [4Fe-4S] cluster as cofactor.

It catalyses the reaction chlorophyllide a + oxidized 2[4Fe-4S]-[ferredoxin] + 2 ADP + 2 phosphate = protochlorophyllide a + reduced 2[4Fe-4S]-[ferredoxin] + 2 ATP + 2 H2O. It functions in the pathway porphyrin-containing compound metabolism; bacteriochlorophyll biosynthesis (light-independent). Its function is as follows. Component of the dark-operative protochlorophyllide reductase (DPOR) that uses Mg-ATP and reduced ferredoxin to reduce ring D of protochlorophyllide (Pchlide) to form chlorophyllide a (Chlide). This reaction is light-independent. The L component serves as a unique electron donor to the NB-component of the complex, and binds Mg-ATP. This chain is Light-independent protochlorophyllide reductase iron-sulfur ATP-binding protein, found in Jannaschia sp. (strain CCS1).